The primary structure comprises 486 residues: Small ribosomal subunit protein uS17B (486 aa).

Positions 1-112 are 30S ribosomal protein S17; that stretch reads MRDIGINGIK…IENKSNINFV (112 aa). Positions 113–486 are unknown; sequence DNLLNVDDKW…ELWTRKNYKS (374 aa).

The protein belongs to the universal ribosomal protein uS17 family. In terms of assembly, part of the 30S ribosomal subunit.

One of the primary rRNA binding proteins, it binds specifically to the 5'-end of 16S ribosomal RNA. This chain is Small ribosomal subunit protein uS17B, found in Methanosarcina acetivorans (strain ATCC 35395 / DSM 2834 / JCM 12185 / C2A).